The chain runs to 125 residues: Small ribosomal subunit protein bS16 (125 aa).

The disordered stretch occupies residues 87–125 (EGKKKQALARQSASKKAVKEKTEESKGSEVDSETSTSAD). Residues 103-115 (AVKEKTEESKGSE) are compositionally biased toward basic and acidic residues.

It belongs to the bacterial ribosomal protein bS16 family.

The sequence is that of Small ribosomal subunit protein bS16 from Prochlorococcus marinus (strain MIT 9211).